The primary structure comprises 561 residues: Centromere protein T (561 aa).

The segment at 1–78 (MADHNPDGDP…IGRSAHVQAR (78 aa)) is disordered. Residues 18 to 27 (RVLDTADPRT) are compositionally biased toward basic and acidic residues. Polar residues predominate over residues 45-57 (TASSRRLSGQTKT). Ser47 carries the post-translational modification Phosphoserine. Phosphothreonine is present on Thr85. The segment at 93-421 (ILLTAPESSI…RHHQFPEPAP (329 aa)) is flexible stalk domain. 3 disordered regions span residues 114–134 (APQVVQPSRRESSRGSLELQL), 256–293 (HSLPCTPHTGAEDAEQAAGRRTQSSGPGLQNNSPGKPA), and 314–457 (SSGV…DPHK). The segment covering 276–289 (RTQSSGPGLQNNSP) has biased composition (polar residues). Positions 329 to 341 (GVEEAEKKMKEEG) are enriched in basic and acidic residues. 7 positions are modified to phosphoserine: Ser343, Ser345, Ser356, Ser373, Ser385, Ser386, and Ser397. The segment covering 365-376 (TQVTEAEGSQGT) has biased composition (polar residues). Residues 439–450 (RCPPRSRTTGPR) are compositionally biased toward low complexity.

It belongs to the CENP-T/CNN1 family. Component of the CENPA-CAD complex, composed of CENPI, CENPK, CENPL, CENPO, CENPP, CENPQ, CENPR and CENPS. The CENPA-CAD complex is probably recruited on centromeres by the CENPA-NAC complex, at least composed of CENPA, CENPC, CENPH, CENPM, CENPN, CENPT and CENPU. Identified in a centromeric complex containing histones H2A, H2B, H3 and H4, and at least CENPA, CENPB, CENPC, CENPT, CENPN, HJURP, SUPT16H, SSRP1 and RSF1. Interacts (via N-terminus) with the NDC80 complex. Heterodimer with CENPW; this dimer coassembles with CENPS-CENPX heterodimers at centromeres to form the tetrameric CENP-T-W-S-X complex. Dynamically phosphorylated during the cell cycle. Phosphorylated during G2 phase, metaphase and anaphase, but not during telophase or G1 phase.

It localises to the nucleus. The protein resides in the chromosome. Its subcellular location is the centromere. The protein localises to the kinetochore. Component of the CENPA-NAC (nucleosome-associated) complex, a complex that plays a central role in assembly of kinetochore proteins, mitotic progression and chromosome segregation. The CENPA-NAC complex recruits the CENPA-CAD (nucleosome distal) complex and may be involved in incorporation of newly synthesized CENPA into centromeres. Part of a nucleosome-associated complex that binds specifically to histone H3-containing nucleosomes at the centromere, as opposed to nucleosomes containing CENPA. Component of the heterotetrameric CENP-T-W-S-X complex that binds and supercoils DNA, and plays an important role in kinetochore assembly. CENPT has a fundamental role in kinetochore assembly and function. It is one of the inner kinetochore proteins, with most further proteins binding downstream. Required for normal chromosome organization and normal progress through mitosis. In Macaca fascicularis (Crab-eating macaque), this protein is Centromere protein T (CENPT).